Reading from the N-terminus, the 534-residue chain is Pentatricopeptide repeat-containing protein At1g07590, mitochondrial (534 aa).

Residues 1–20 constitute a mitochondrion transit peptide; sequence MRSIIALMRQREYFVQAIRR. PPR repeat units follow at residues 165–199, 200–234, 235–269, 270–300, 305–335, 339–369, 374–408, 409–443, and 451–485; these read NELLYNNLVIACLDQGVIRLALEYMKKMRELGYRT, SHLVYNRLIIRNSAPGRRKLIAKDLALMKADKATP, HVSTYHILMKLEANEHNIDGVLKAFDGMKKAGVEP, NEVSYCILAMAHAVARLYTVAEAYTEEIEKS, NWSTLDILMILYGRLGKEKELARTWNVIRGF, RSKSYLLATEAFARVGNLDRAEELWLEMKNV, ETEQFNSLLSVYCKDGLIEKAIGVFREMTGNGFKP, NSITYRHLALGCAKAKLMKEALKNIEMGLNLKTSK, and WLETTLSIIECFAEKGDVENSEKLFEEVKNAKYNR.

It belongs to the PPR family. P subfamily.

The protein localises to the mitochondrion. The protein is Pentatricopeptide repeat-containing protein At1g07590, mitochondrial of Arabidopsis thaliana (Mouse-ear cress).